A 275-amino-acid chain; its full sequence is Stage 0 sporulation protein YaaT (275 aa).

The PSP1 C-terminal domain occupies 61–146 (RKVIRVADDR…FKTRIELRQI (86 aa)).

Its subcellular location is the cytoplasm. Its function is as follows. Essential for the phosphorelay during initiation of sporulation. May control the level of phosphorylated spo0A through spo0E activity during sporulation. This chain is Stage 0 sporulation protein YaaT (yaaT), found in Bacillus subtilis (strain 168).